The following is a 418-amino-acid chain: Acyltransferase calJ (418 aa).

S79 acts as the Acyl-ester intermediate in catalysis. 2 residues coordinate substrate: R176 and Y191.

The protein belongs to the class-A beta-lactamase family.

Its pathway is secondary metabolite biosynthesis. In terms of biological role, acyltransferase; part of the gene cluster that mediates the biosynthesis of calbistrin A and related compounds. Calbistrin A is a secondary metabolite with an interesting structure that was recently found to have bioactivity against leukemia cells. It consists of two polyketides linked by an ester bond: a bicyclic decalin containing polyketide and a linear 12 carbon dioic acid structure. The polyketide synthase calA is probably responsible for forming the decalin moiety. Because calA lacks a designated enoylreductase (ER) domain, the required activity is provided by the trans-enoyl reductase calK. Following release from the PKS, calF then probably catalyzes the oxidation and the subsequent Diels Alder cycloisomerization that lead to the formation of the decalin moiety. The decalin polyketide backbone includes two C-methyl groups, at C7 and C11 in backbone, of which the C7 position is probably methylated by the methyltransferase domain of calA. A candidate for adding the methyl group at C11, if not done by CalA, is the cluster methyltransferase calH. Several additional tailoring enzymes within the cluster could be involved in the modification of the decalin polyketide product. Those include the 3 cytochrome P450 monooxygenases CalE, CalG and CalL, of which one might be responsible for the introduction of the extra hydroxyl group attached to the backbone of the decalin moiety, at position C9 in the backbone, that allows for attachment of the linear moiety. One tailoring enzyme activity that is expected to be involved in biosynthesis of calbistrin is an acyltransferase for connecting the two polyketide synthase products, and which could be performed by the cluster acyltransferase calJ. The enzyme responsible for the biosynthesis of the linear moiety, probably a second PKS, has not been identified yet. The protein is Acyltransferase calJ of Penicillium decumbens.